The sequence spans 172 residues: MSSKRAKAKTTKKRPQRATSNVFAMFDQSQIQEFKEAFNMIDQNRDGFIDKEDLHDMLASMGKNPTDEYLEGMMSEAPGPINFTMFLTMFGEKLNGTDPEDVIRNAFACFDEEASGFIHEDHLRELLTTMGDRFTDEEVDEMYREAPIDKKGNFNYVEFTRILKHGAKDKDD.

Basic residues predominate over residues 1 to 16; the sequence is MSSKRAKAKTTKKRPQ. A disordered region spans residues 1-20; sequence MSSKRAKAKTTKKRPQRATS. S2 is subject to N-acetylserine. 3 consecutive EF-hand domains span residues 29-64, 98-133, and 134-169; these read SQIQ…MGKN, DPED…MGDR, and FTDE…GAKD. The Ca(2+) site is built by D42, N44, D46, and D53.

As to quaternary structure, myosin is a hexamer of 2 heavy chains and 4 light chains.

Myosin regulatory subunit that plays an important role in regulation of both smooth muscle and nonmuscle cell contractile activity. Implicated in cytokinesis, receptor capping, and cell locomotion. This is Myosin regulatory light chain 2, smooth muscle major isoform from Gallus gallus (Chicken).